We begin with the raw amino-acid sequence, 441 residues long: Cortexillin-2 (441 aa).

Residues 1–229 (MDLNKEWEKV…VLYTSLFFHA (229 aa)) are actin-binding. Calponin-homology (CH) domains are found at residues 9 to 117 (KVQE…RKYR) and 126 to 231 (KSSE…HAFR). Coiled coils occupy residues 229–362 (AFRA…RLGL) and 406–430 (SFEE…KYLN).

Belongs to the cortexillin family. In terms of assembly, homodimer; parallel.

The protein localises to the cytoplasm. It is found in the cytoskeleton. In terms of biological role, actin-bundling protein. When linked to F-actin the actin filaments form preferentially anti-parallel bundles that associate into meshworks. Plays a major role in cytokinesis. Negatively regulates cortical localization of rapgap1. This Dictyostelium discoideum (Social amoeba) protein is Cortexillin-2 (ctxB).